The sequence spans 386 residues: 2-isopropylmalate synthase (386 aa).

One can recognise a Pyruvate carboxyltransferase domain in the interval 12-265 (VRIFDTTLRD…DVGVRTYLLY (254 aa)). Positions 21, 203, 205, and 239 each coordinate a divalent metal cation.

Belongs to the alpha-IPM synthase/homocitrate synthase family. In terms of assembly, homodimer. The cofactor is a divalent metal cation.

The catalysed reaction is 3-methyl-2-oxobutanoate + acetyl-CoA + H2O = (2S)-2-isopropylmalate + CoA + H(+). It functions in the pathway amino-acid biosynthesis; L-leucine biosynthesis; L-leucine from 3-methyl-2-oxobutanoate: step 1/4. Is not inhibited by leucine. Functionally, catalyzes the condensation of the acetyl group of acetyl-CoA with 3-methyl-2-oxobutanoate (2-oxoisovalerate) to form 3-carboxy-3-hydroxy-4-methylpentanoate (2-isopropylmalate). Carries out the first step of the leucine biosynthesis pathway. Also displays a low citramalate synthase activity, using pyruvate as substrate, but is unable to use 2-oxoglutarate. The polypeptide is 2-isopropylmalate synthase (Sulfolobus acidocaldarius (strain ATCC 33909 / DSM 639 / JCM 8929 / NBRC 15157 / NCIMB 11770)).